The following is a 154-amino-acid chain: Large ribosomal subunit protein uL30 (154 aa).

Residues 114 to 146 (PTLRLHPPRGGHDGVKHPVKEGGQLGKHDTEGI) are disordered. Over residues 123–144 (GGHDGVKHPVKEGGQLGKHDTE) the composition is skewed to basic and acidic residues.

Belongs to the universal ribosomal protein uL30 family. In terms of assembly, part of the 50S ribosomal subunit. Binds 5S rRNA.

In terms of biological role, this is one of 5 proteins that mediate the attachment of the 5S rRNA onto the large ribosomal subunit, stabilizing the orientation of adjacent RNA domains. This Haloarcula marismortui (strain ATCC 43049 / DSM 3752 / JCM 8966 / VKM B-1809) (Halobacterium marismortui) protein is Large ribosomal subunit protein uL30.